The primary structure comprises 239 residues: Small ribosomal subunit protein eS1 (239 aa).

The tract at residues 1-24 (MAIQPPGSYPQGNKKGKAKKKSGQ) is disordered.

It belongs to the eukaryotic ribosomal protein eS1 family. Component of the small ribosomal subunit. Mature ribosomes consist of a small (40S) and a large (60S) subunit. The 40S subunit contains about 33 different proteins and 1 molecule of RNA (18S). The 60S subunit contains about 49 different proteins and 3 molecules of RNA (25S, 5.8S and 5S).

It localises to the cytoplasm. The protein is Small ribosomal subunit protein eS1 of Encephalitozoon cuniculi (strain GB-M1) (Microsporidian parasite).